A 245-amino-acid chain; its full sequence is Cuticle protein (245 aa).

The region spanning 25–86 (VSYAAAPALV…TGDSKSQQES (62 aa)) is the Chitin-binding type R&amp;R domain. The disordered stretch occupies residues 79–100 (DSKSQQESRSGDVVQGSYSVVD). Tandem repeats lie at residues 92-95 (VQGS), 108-111 (VDYT), and 118-121 (FNAV).

In terms of biological role, component of the cuticle of African malaria mosquito. The protein is Cuticle protein (Ccp84Ab) of Anopheles gambiae (African malaria mosquito).